Reading from the N-terminus, the 698-residue chain is MSQEKKVFKTEWAGRSLTIETGQLAKQANGAVLVRYGDTVVLSTATASKEPRDGDFFPLTVNYEEKMYAAGKIPGGFKKREGRPGDDATLTARLIDRPIRPLFPKGYKHDVQIMNMVLSADPDCSPQMAAMIGSSMALSVSDIPFQGPIAGVNVGYIDGKYIINPTVEEKEVSRLDLEVAGHKDAVNMVEAGASEITEQEMLEAIFFGHEEIQRLVDFQQQIVDHIQPVKQEFIPAERDEALVERVKSLTEEKGLKETVLTFDKQQRDENLDNLKEEIVNEFIDEEDPENELLIKEVYAILNELVKEEVRRLIADEKIRPDGRKPDEIRPLDSEVGILPRTHGSGLFTRGQTQALSVLTLGALGDYQLIDGLGPEEEKRFMHHYNFPNFSVGETGPVRAPGRREIGHGALGERALKYIIPDTADFPYTIRIVSEVLESNGSSSQASICGSTLALMDAGVPIKAPVAGIAMGLVTREDSYTILTDIQGMEDALGDMDFKVAGTKEGITAIQMDIKIDGLTREIIEEALEQARRGRLEIMNHMLQTIDQPRTELSAYAPKVVTMTIKPDKIRDVIGPGGKKINEIIDETGVKLDIEQDGTIFIGAVDQAMINRAREIIEEITREAEVGQTYQATVKRIEKYGAFVGLFPGKDALLHISQISKNRIEKVEDVLKIGDTIEVKITEIDKQGRVNASHRALEE.

Mg(2+)-binding residues include Asp-490 and Asp-496. The KH domain occupies 557–616 (PKVVTMTIKPDKIRDVIGPGGKKINEIIDETGVKLDIEQDGTIFIGAVDQAMINRAREII). One can recognise an S1 motif domain in the interval 626–694 (GQTYQATVKR…KQGRVNASHR (69 aa)).

It belongs to the polyribonucleotide nucleotidyltransferase family. The cofactor is Mg(2+).

The protein localises to the cytoplasm. The catalysed reaction is RNA(n+1) + phosphate = RNA(n) + a ribonucleoside 5'-diphosphate. Its function is as follows. Involved in mRNA degradation. Catalyzes the phosphorolysis of single-stranded polyribonucleotides processively in the 3'- to 5'-direction. The protein is Polyribonucleotide nucleotidyltransferase of Staphylococcus aureus (strain Mu3 / ATCC 700698).